The chain runs to 557 residues: MAKLLQFNEEALKSILKGVKTLAKAVKVTLGPKGRNVVINKGFGSPLSTKDGVTVAKEVVLKDKFENMGAQLVNQVAAKTSDVAGDGTTTAIVLAEAIYSAGVKNVAAGANPMSLKRGIDQAVETITRSLDHLSTPVNTAQEVRQIATISANNDGEIGRIIGEAMERVGKDGIITVAEAKGIETHVDYVEGMQFDKGYVSPYFITNAEQMSVELSNADILITDKKLSAAKDIIPVLEKIMEKGARPLLIIAEDIDGEALATLVVNKLKAGMTVCAVKAPGFGDRRKAMLQDIAILTGGKVVSEEVGLKLDEVGPEVLGRAKTIKVSKEETTIIDGAGQSNEVKSRLAQIKAELANASTSKYDKEKLEERLAKMVGGVAVVNVGAATETELKEKKARVEDALHATRAAVAQGIVPGGGVALLRAVKSLEKLQLTGDEAIGVTIIKQAAFAPAIAIANNCGKQGNLIAEKIYEATGSYGYDGLTDEFKDLLKAGVIDPVLVTKSALINAASIAGLLLTTAAMITDKPQPKSQPAGMPGMDGMGGMGMGGMGGMGGMGMM.

ATP is bound by residues 29-32 (TLGP), lysine 50, 86-90 (DGTTT), glycine 416, and aspartate 495.

This sequence belongs to the chaperonin (HSP60) family. As to quaternary structure, forms a cylinder of 14 subunits composed of two heptameric rings stacked back-to-back. Interacts with the co-chaperonin GroES.

It is found in the cytoplasm. It carries out the reaction ATP + H2O + a folded polypeptide = ADP + phosphate + an unfolded polypeptide.. Its function is as follows. Together with its co-chaperonin GroES, plays an essential role in assisting protein folding. The GroEL-GroES system forms a nano-cage that allows encapsulation of the non-native substrate proteins and provides a physical environment optimized to promote and accelerate protein folding. This chain is Chaperonin GroEL 1, found in Protochlamydia amoebophila (strain UWE25).